Consider the following 414-residue polypeptide: Eukaryotic initiation factor 4A-3 (414 aa).

Residues 41–69 (ESFDDMGLQENLLRGIYAYGFEKPSAIQQ) carry the Q motif motif. One can recognise a Helicase ATP-binding domain in the interval 72–242 (IVPFCKGLDV…RKFMNKPVRI (171 aa)). 85 to 92 (AQSGTGKT) contacts ATP. Positions 190–193 (DEAD) match the DEAD box motif. The Helicase C-terminal domain maps to 253–414 (GIKQFYVNVE…ELPANVADLL (162 aa)).

The protein belongs to the DEAD box helicase family. eIF4A subfamily. As to quaternary structure, eIF4F is a multi-subunit complex, the composition of which varies with external and internal environmental conditions. It is composed of at least EIF4A, EIF4E and EIF4G. Interacts with DRM2 (via UBA domains).

The protein localises to the cytoplasm. It localises to the nucleus. It carries out the reaction ATP + H2O = ADP + phosphate + H(+). ATP-dependent RNA helicase which is a subunit of the eIF4F complex involved in cap recognition and is required for mRNA binding to ribosome. In the current model of translation initiation, eIF4A unwinds RNA secondary structures in the 5'-UTR of mRNAs which is necessary to allow efficient binding of the small ribosomal subunit, and subsequent scanning for the initiator codon. This Oryza sativa subsp. japonica (Rice) protein is Eukaryotic initiation factor 4A-3.